We begin with the raw amino-acid sequence, 218 residues long: Mitochondrial import inner membrane translocase subunit TIM17-1 (218 aa).

Transmembrane regions (helical) follow at residues 19–36, 66–82, 89–105, and 116–133; these read VGGA…YHLI, FSVW…ALVY, PWNS…FLSL, and ALVG…GIML.

It belongs to the Tim17/Tim22/Tim23 family. In terms of assembly, component of the TIM17:23 complex at least composed of TIM23, TIM17 and TIM50. The complex interacts with the TIM44 component of the PAM complex. In terms of tissue distribution, expressed in flowers, leaves and cotyledons, and at very low levels in roots.

Its subcellular location is the mitochondrion inner membrane. Its function is as follows. Essential component of the TIM17:23 complex, a complex that mediates the translocation of transit peptide-containing proteins across the mitochondrial inner membrane. Links the inner and outer membranes. In Arabidopsis thaliana (Mouse-ear cress), this protein is Mitochondrial import inner membrane translocase subunit TIM17-1 (TIM17-1).